We begin with the raw amino-acid sequence, 190 residues long: GTP cyclohydrolase 1 (190 aa).

Zn(2+) is bound by residues Cys75, His78, and Cys146.

It belongs to the GTP cyclohydrolase I family. As to quaternary structure, toroid-shaped homodecamer, composed of two pentamers of five dimers.

The catalysed reaction is GTP + H2O = 7,8-dihydroneopterin 3'-triphosphate + formate + H(+). It functions in the pathway cofactor biosynthesis; 7,8-dihydroneopterin triphosphate biosynthesis; 7,8-dihydroneopterin triphosphate from GTP: step 1/1. The polypeptide is GTP cyclohydrolase 1 (Campylobacter curvus (strain 525.92)).